A 433-amino-acid chain; its full sequence is Cell division control protein KAR1 (433 aa).

Disordered regions lie at residues 1–38 (MNVTSPKDGNHSFSKKNRFNTNKPRFHKLNEQAQSINL), 69–101 (TKNINSDSDRSNDTIKQNNYNKRETGYNPFYNG), and 207–227 (KPLPLPYLNSPNSDSTPTLQR). Threonine 233 is modified (phosphothreonine).

As to quaternary structure, interacts with SPC72.

It localises to the cytoplasm. The protein localises to the cytoskeleton. It is found in the microtubule organizing center. The protein resides in the spindle pole body. In terms of biological role, KAR1 is required for function of both intranuclear and extranuclear microtubules. KAR1 helps localize CDC31 to the spindle pole body (SPB), CDC31 then initiates SPB duplication via interaction with a downstream effector. In Saccharomyces cerevisiae (strain ATCC 204508 / S288c) (Baker's yeast), this protein is Cell division control protein KAR1 (KAR1).